The following is a 1465-amino-acid chain: DNA polymerase III PolC-type (1465 aa).

The Exonuclease domain maps to 427 to 583; the sequence is YVVFDVETTG…YDAEATGRLL (157 aa).

It belongs to the DNA polymerase type-C family. PolC subfamily.

The protein localises to the cytoplasm. The enzyme catalyses DNA(n) + a 2'-deoxyribonucleoside 5'-triphosphate = DNA(n+1) + diphosphate. In terms of biological role, required for replicative DNA synthesis. This DNA polymerase also exhibits 3' to 5' exonuclease activity. This Streptococcus pyogenes serotype M5 (strain Manfredo) protein is DNA polymerase III PolC-type.